The chain runs to 331 residues: CRISPR-associated endonuclease Cas1 (331 aa).

Mn(2+) is bound by residues glutamate 155, histidine 221, and glutamate 236.

Belongs to the CRISPR-associated endonuclease Cas1 family. As to quaternary structure, homodimer, forms a heterotetramer with a Cas2 homodimer. Requires Mg(2+) as cofactor. Mn(2+) is required as a cofactor.

Its function is as follows. CRISPR (clustered regularly interspaced short palindromic repeat), is an adaptive immune system that provides protection against mobile genetic elements (viruses, transposable elements and conjugative plasmids). CRISPR clusters contain spacers, sequences complementary to antecedent mobile elements, and target invading nucleic acids. CRISPR clusters are transcribed and processed into CRISPR RNA (crRNA). Acts as a dsDNA endonuclease. Involved in the integration of spacer DNA into the CRISPR cassette. The chain is CRISPR-associated endonuclease Cas1 from Methanopyrus kandleri (strain AV19 / DSM 6324 / JCM 9639 / NBRC 100938).